The following is a 247-amino-acid chain: MRVRLLEATENPEELICQSARNDYMSDWVGDTPLDTAMASVDGDTTDEKLSNLIAQLLTRGHYGPFEHPSATFAIEGVSRSCMAQLTRHRHASFDVQSMRYVAFDDVDPAAVAEGELVVTPPSATDPDWVGRNQDAGDIDEETMAEREAVFQASVRRAVEDYQELLGLGMPPEDARFVLPIGTEVNVVITLNPRSLMHVADMRAAADAQWEIRELTEQLLDAAAQWCPHTFEYYDAEMKHRKNRLAP.

The 237-residue stretch at 1–237 folds into the ThyX domain; that stretch reads MRVRLLEATE…PHTFEYYDAE (237 aa). DUMP contacts are provided by residues 85 to 88, 98 to 100, and Arg-176; these read QLTR and SMR. Residue 88–90 coordinates FAD; sequence RHR. Residues 88-98 carry the ThyX motif motif; it reads RHRHASFDVQS. Residues 192–194 and His-198 contribute to the FAD site; that span reads NPR. Residue Arg-203 coordinates dUMP. The active-site Involved in ionization of N3 of dUMP, leading to its activation is the Arg-203.

This sequence belongs to the thymidylate synthase ThyX family. As to quaternary structure, homotetramer. Requires FAD as cofactor.

It carries out the reaction dUMP + (6R)-5,10-methylene-5,6,7,8-tetrahydrofolate + NADPH + H(+) = dTMP + (6S)-5,6,7,8-tetrahydrofolate + NADP(+). The protein operates within pyrimidine metabolism; dTTP biosynthesis. Its function is as follows. Catalyzes the reductive methylation of 2'-deoxyuridine-5'-monophosphate (dUMP) to 2'-deoxythymidine-5'-monophosphate (dTMP) while utilizing 5,10-methylenetetrahydrofolate (mTHF) as the methyl donor, and NADPH and FADH(2) as the reductant. The sequence is that of Flavin-dependent thymidylate synthase from Halobacterium salinarum (strain ATCC 700922 / JCM 11081 / NRC-1) (Halobacterium halobium).